The primary structure comprises 508 residues: Polyamine oxidase FMS1 (508 aa).

The protein belongs to the flavin monoamine oxidase family. FAD is required as a cofactor.

The catalysed reaction is spermine + O2 + H2O = 3-aminopropanal + spermidine + H2O2. The enzyme catalyses spermidine + O2 + H2O = 3-aminopropanal + putrescine + H2O2. It carries out the reaction N(1)-acetylspermine + O2 + H2O = 3-acetamidopropanal + spermidine + H2O2. It catalyses the reaction N(1)-acetylspermidine + O2 + H2O = 3-acetamidopropanal + putrescine + H2O2. The catalysed reaction is N(8)-acetylspermidine + O2 + H2O = 4-acetamidobutanal + propane-1,3-diamine + H2O2. Its function is as follows. Involved in the production of beta-alanine, a precursor of pantothenic acid. Multicopy suppressor of fenpropimorph resistance. In Saccharomyces cerevisiae (strain ATCC 204508 / S288c) (Baker's yeast), this protein is Polyamine oxidase FMS1 (FMS1).